Consider the following 49-residue polypeptide: Large ribosomal subunit protein eL40 (49 aa).

It belongs to the eukaryotic ribosomal protein eL40 family.

The sequence is that of Large ribosomal subunit protein eL40 from Methanococcoides burtonii (strain DSM 6242 / NBRC 107633 / OCM 468 / ACE-M).